Consider the following 414-residue polypeptide: DNA polymerase IV 1 (414 aa).

Positions 8–189 constitute a UmuC domain; sequence IFHIDMNSFY…LPVGEMHGVG (182 aa). Positions 12 and 108 each coordinate Mg(2+). The active site involves Glu109. The interval 391–414 is disordered; that stretch reads LKKEESKTKGTSFNKDFFQDEKKS.

It belongs to the DNA polymerase type-Y family. Monomer. Mg(2+) is required as a cofactor.

The protein resides in the cytoplasm. It catalyses the reaction DNA(n) + a 2'-deoxyribonucleoside 5'-triphosphate = DNA(n+1) + diphosphate. Functionally, poorly processive, error-prone DNA polymerase involved in untargeted mutagenesis. Copies undamaged DNA at stalled replication forks, which arise in vivo from mismatched or misaligned primer ends. These misaligned primers can be extended by PolIV. Exhibits no 3'-5' exonuclease (proofreading) activity. May be involved in translesion synthesis (TSL), in conjunction with the beta clamp from PolIII. In Bacillus subtilis (strain 168), this protein is DNA polymerase IV 1 (dinB1).